Reading from the N-terminus, the 505-residue chain is Maturase K (505 aa).

It belongs to the intron maturase 2 family. MatK subfamily.

Its subcellular location is the plastid. The protein resides in the chloroplast. Its function is as follows. Usually encoded in the trnK tRNA gene intron. Probably assists in splicing its own and other chloroplast group II introns. In Amaranthus greggii (Gregg's amaranth), this protein is Maturase K.